Consider the following 311-residue polypeptide: Triacylglycerol lipase (311 aa).

An N-terminal signal peptide occupies residues 1 to 26 (MKKKSLLPLGLAIGLASLAASPLIQA). Residues 35–280 (PIVLAHGMLG…DNYRMNHLDE (246 aa)) form the AB hydrolase-1 domain. A substrate-binding site is contributed by M42. S108 serves as the catalytic Nucleophile. H109 lines the substrate pocket. C209 and C261 are disulfide-bonded. Ca(2+) is bound at residue D235. Active-site charge relay system residues include D255 and H277. Ca(2+) contacts are provided by D279, Q283, and L287.

Belongs to the AB hydrolase superfamily. Pseudomonas lipase family. In terms of assembly, monomer. It depends on Ca(2+) as a cofactor.

The protein resides in the secreted. The catalysed reaction is a triacylglycerol + H2O = a diacylglycerol + a fatty acid + H(+). Na(+) increases lipase activity. Inhibited by diethyl p-nitrophenyl phosphate and 3,4-dichloroisocoumarin (DCI). Its function is as follows. Catalyzes the hydrolysis of triacylglycerol. It also exhibits some esterase activity with p-nitrophenyl acetate and Tween 80 as substrates, however the lipase activity is approximately eight times the esterase activity. It shows a marked specificity for the 1,3-oleyl residues of triolein. The protein is Triacylglycerol lipase of Pseudomonas aeruginosa (strain ATCC 15692 / DSM 22644 / CIP 104116 / JCM 14847 / LMG 12228 / 1C / PRS 101 / PAO1).